The following is a 122-amino-acid chain: Small ribosomal subunit protein uS13 (122 aa).

Positions 98 to 116 are enriched in basic residues; that stretch reads VRGQKTKTNARTRKGRRKT. The tract at residues 98–122 is disordered; it reads VRGQKTKTNARTRKGRRKTVGAATK.

Belongs to the universal ribosomal protein uS13 family. Part of the 30S ribosomal subunit. Forms a loose heterodimer with protein S19. Forms two bridges to the 50S subunit in the 70S ribosome.

Functionally, located at the top of the head of the 30S subunit, it contacts several helices of the 16S rRNA. In the 70S ribosome it contacts the 23S rRNA (bridge B1a) and protein L5 of the 50S subunit (bridge B1b), connecting the 2 subunits; these bridges are implicated in subunit movement. Contacts the tRNAs in the A and P-sites. The sequence is that of Small ribosomal subunit protein uS13 from Campylobacter fetus subsp. fetus (strain 82-40).